A 144-amino-acid polypeptide reads, in one-letter code: Large ribosomal subunit protein uL16 (144 aa).

Over residues 1–17 (MLQPKKTKFRRQQKGRA) the composition is skewed to basic residues. Residues 1–22 (MLQPKKTKFRRQQKGRAKGNAQ) form a disordered region.

This sequence belongs to the universal ribosomal protein uL16 family. Part of the 50S ribosomal subunit.

In terms of biological role, binds 23S rRNA and is also seen to make contacts with the A and possibly P site tRNAs. This Bacteroides thetaiotaomicron (strain ATCC 29148 / DSM 2079 / JCM 5827 / CCUG 10774 / NCTC 10582 / VPI-5482 / E50) protein is Large ribosomal subunit protein uL16.